Here is a 494-residue protein sequence, read N- to C-terminus: MTSLVPGAGLLPIPTSSPLTAVSSLGVSLSSLGAIPAAALDPNITALGEIPQPPLMGNVDPSKIDEIRRTVYVGNLNSQTTTADQLLEFFKQVGEVKFVRMAGDETQPTRFAFVEFADQNSVPRALAFNGVMFGDRPLKINHSNNAIVKPPEMTPQAAAKELEEVMKRVREAQSFISAAIEPESGKSNERKGGRSRSHTRSKSRSSSKSHSRRKRSQSKHRSRSHNRSRSRQKDRARSKSPHKKRSKSRERRKSRSRSRSRDKRKDTREKVKERVKEREREKEKEREKEREKDKERGKNKDKDREKEKDHEKERDKEKEKEQDKDKEREKDRSKEADEKRKKEKKSRTPPRSYNSSRRSRSASRERRRRRSRSSSRSPRTSKTIKRKSSRSPSPRGRNKKEKKREKERDHISDRRERERSTSTKKSSSDRDGKEKVEKTNTPVKEKEHSKEADSTVSTDADEKDTARTEEESKAQHNGNCQPHEERLCSTADAV.

Residues R69–N145 form the RRM domain. Phosphoserine is present on residues S174 and S187. Residues I176–V494 are disordered. The span at E183–G192 shows a compositional bias: basic and acidic residues. Basic residues-rich tracts occupy residues G193–S230 and S238–D262. Residues K263–R340 show a composition bias toward basic and acidic residues. T348 is modified (phosphothreonine). Basic residues predominate over residues R357–S373. Basic and acidic residues-rich tracts occupy residues R404–D453 and K463–A474.

The protein belongs to the splicing factor SR family. As to quaternary structure, interacts with SREK1IP1. Homodimer. Binds SFRS1, SFRS2, SFRS3 and SFRS6. Interacts with the spliceosome. In terms of tissue distribution, ubiquitous. Detected in liver, brain, lung, spleen, testis and pancreas.

It is found in the nucleus. Functionally, participates in the regulation of alternative splicing by modulating the activity of other splice facors. Inhibits the splicing activity of SFRS1, SFRS2 and SFRS6. Augments the splicing activity of SFRS3. The sequence is that of Splicing regulatory glutamine/lysine-rich protein 1 (Srek1) from Rattus norvegicus (Rat).